The sequence spans 25 residues: Aurein-5.2 (25 aa).

In terms of tissue distribution, expressed by the skin dorsal glands.

It is found in the secreted. Has antimicrobial activity against L.lactis and S.uberis. The sequence is that of Aurein-5.2 from Ranoidea raniformis (Southern bell frog).